The following is a 338-amino-acid chain: DNA-directed RNA polymerase subunit alpha (338 aa).

Residues 1-234 (MIQKNWQELT…DQLNVFVNFE (234 aa)) are alpha N-terminal domain (alpha-NTD). The interval 250–338 (FNPALLKKVD…DLAKRFEEHY (89 aa)) is alpha C-terminal domain (alpha-CTD).

This sequence belongs to the RNA polymerase alpha chain family. Homodimer. The RNAP catalytic core consists of 2 alpha, 1 beta, 1 beta' and 1 omega subunit. When a sigma factor is associated with the core the holoenzyme is formed, which can initiate transcription.

The catalysed reaction is RNA(n) + a ribonucleoside 5'-triphosphate = RNA(n+1) + diphosphate. In terms of biological role, DNA-dependent RNA polymerase catalyzes the transcription of DNA into RNA using the four ribonucleoside triphosphates as substrates. This chain is DNA-directed RNA polymerase subunit alpha, found in Methylocella silvestris (strain DSM 15510 / CIP 108128 / LMG 27833 / NCIMB 13906 / BL2).